The following is a 39-amino-acid chain: TFINVKCTSPKQCLKPCKDLYGPHAGEKCMNGKCKCYKV.

3 disulfides stabilise this stretch: Cys7–Cys29, Cys13–Cys34, and Cys17–Cys36.

It belongs to the short scorpion toxin superfamily. Potassium channel inhibitor family. Alpha-KTx 02 subfamily. As to expression, expressed by the venom gland.

It is found in the secreted. Functionally, blocks human voltage-gated potassium (Kv) channels Kv1.1/KCNA, Kv1.2/KCNA2 and Kv1.3/KCNA3. Exhibits high affinity for Kv1.2/KCNA2 and selectivity over Kv1.1/KCNA and Kv1.3/KCNA3. In Centruroides bonito (Scorpion), this protein is Potassium channel toxin alpha-KTx 2.24.